Here is a 342-residue protein sequence, read N- to C-terminus: S-adenosylmethionine:tRNA ribosyltransferase-isomerase (342 aa).

It belongs to the QueA family. As to quaternary structure, monomer.

It localises to the cytoplasm. It catalyses the reaction 7-aminomethyl-7-carbaguanosine(34) in tRNA + S-adenosyl-L-methionine = epoxyqueuosine(34) in tRNA + adenine + L-methionine + 2 H(+). The protein operates within tRNA modification; tRNA-queuosine biosynthesis. Transfers and isomerizes the ribose moiety from AdoMet to the 7-aminomethyl group of 7-deazaguanine (preQ1-tRNA) to give epoxyqueuosine (oQ-tRNA). This Sulfurimonas denitrificans (strain ATCC 33889 / DSM 1251) (Thiomicrospira denitrificans (strain ATCC 33889 / DSM 1251)) protein is S-adenosylmethionine:tRNA ribosyltransferase-isomerase.